The primary structure comprises 174 residues: NADH-quinone oxidoreductase subunit B 1 (174 aa).

Residues Cys38, Cys39, Cys104, and Cys133 each coordinate [4Fe-4S] cluster.

This sequence belongs to the complex I 20 kDa subunit family. NDH-1 is composed of 14 different subunits. Subunits NuoB, C, D, E, F, and G constitute the peripheral sector of the complex. Requires [4Fe-4S] cluster as cofactor.

It is found in the cell membrane. It catalyses the reaction a quinone + NADH + 5 H(+)(in) = a quinol + NAD(+) + 4 H(+)(out). NDH-1 shuttles electrons from NADH, via FMN and iron-sulfur (Fe-S) centers, to quinones in the respiratory chain. The immediate electron acceptor for the enzyme in this species is believed to be ubiquinone. Couples the redox reaction to proton translocation (for every two electrons transferred, four hydrogen ions are translocated across the cytoplasmic membrane), and thus conserves the redox energy in a proton gradient. The polypeptide is NADH-quinone oxidoreductase subunit B 1 (Chloroflexus aggregans (strain MD-66 / DSM 9485)).